Here is a 347-residue protein sequence, read N- to C-terminus: MSEERFVSGHRRPEDARIEETLRPQRLADYPGQERVKEQLSIYIAAAKKRGEPLDHVLLYGPPGLGKTTLAHIIAHEMGVNLRITSGPAISHQGDLAAILTQLSEGDVLFVDEIHRLNRLVEETLYPAMEDFALDIILGKGPAARTLRLDLPRFTLIGATTRYGALTSPLRDRFGVVLQLQFYSEEELTRILMRAARILNVPLDPGGAREIARRSRGTPRVANRLLRRLRDYAQVRADGVITRDVADAGLRMMGVDAMGLDTVDHKVLLTIIHHYGGGPVGLDTIAAATSEEPETIEDVYEPYLMQIGFLQRTPRGRVATRAAYEYLNIPYTDHPDEPEGPVQPRLF.

The tract at residues 1–183 is large ATPase domain (RuvB-L); the sequence is MSEERFVSGH…FGVVLQLQFY (183 aa). Residues leucine 22, arginine 23, glycine 64, lysine 67, threonine 68, threonine 69, 130-132, arginine 173, tyrosine 183, and arginine 220 each bind ATP; that span reads EDF. Threonine 68 lines the Mg(2+) pocket. Positions 184 to 254 are small ATPAse domain (RuvB-S); it reads SEEELTRILM…VADAGLRMMG (71 aa). The tract at residues 257-347 is head domain (RuvB-H); it reads AMGLDTVDHK…PEGPVQPRLF (91 aa). Arginine 312 and arginine 317 together coordinate DNA.

The protein belongs to the RuvB family. As to quaternary structure, homohexamer. Forms an RuvA(8)-RuvB(12)-Holliday junction (HJ) complex. HJ DNA is sandwiched between 2 RuvA tetramers; dsDNA enters through RuvA and exits via RuvB. An RuvB hexamer assembles on each DNA strand where it exits the tetramer. Each RuvB hexamer is contacted by two RuvA subunits (via domain III) on 2 adjacent RuvB subunits; this complex drives branch migration. In the full resolvosome a probable DNA-RuvA(4)-RuvB(12)-RuvC(2) complex forms which resolves the HJ.

The protein resides in the cytoplasm. The enzyme catalyses ATP + H2O = ADP + phosphate + H(+). The RuvA-RuvB-RuvC complex processes Holliday junction (HJ) DNA during genetic recombination and DNA repair, while the RuvA-RuvB complex plays an important role in the rescue of blocked DNA replication forks via replication fork reversal (RFR). RuvA specifically binds to HJ cruciform DNA, conferring on it an open structure. The RuvB hexamer acts as an ATP-dependent pump, pulling dsDNA into and through the RuvAB complex. RuvB forms 2 homohexamers on either side of HJ DNA bound by 1 or 2 RuvA tetramers; 4 subunits per hexamer contact DNA at a time. Coordinated motions by a converter formed by DNA-disengaged RuvB subunits stimulates ATP hydrolysis and nucleotide exchange. Immobilization of the converter enables RuvB to convert the ATP-contained energy into a lever motion, pulling 2 nucleotides of DNA out of the RuvA tetramer per ATP hydrolyzed, thus driving DNA branch migration. The RuvB motors rotate together with the DNA substrate, which together with the progressing nucleotide cycle form the mechanistic basis for DNA recombination by continuous HJ branch migration. Branch migration allows RuvC to scan DNA until it finds its consensus sequence, where it cleaves and resolves cruciform DNA. This Symbiobacterium thermophilum (strain DSM 24528 / JCM 14929 / IAM 14863 / T) protein is Holliday junction branch migration complex subunit RuvB.